Here is a 431-residue protein sequence, read N- to C-terminus: L-ornithine N(5)-monooxygenase (431 aa).

FAD is bound by residues 40-48 and Gln59; that span reads EKLPTFSWH. Position 64 (Lys64) interacts with substrate. Residues 202–205 and Arg228 each bind NADP(+); that span reads CGQS. Residues 242–245 and Asn273 each bind substrate; that span reads NSLY. NADP(+) is bound at residue 273–275; it reads NYS. Position 399-401 (399-401) interacts with FAD; the sequence is TLL. Ser402 is a binding site for substrate.

This sequence belongs to the lysine N(6)-hydroxylase/L-ornithine N(5)-oxygenase family. Requires FAD as cofactor.

The protein resides in the cytoplasm. Its subcellular location is the nucleus. The catalysed reaction is L-ornithine + NADPH + O2 = N(5)-hydroxy-L-ornithine + NADP(+) + H2O. It catalyses the reaction L-ornithine + NADH + O2 = N(5)-hydroxy-L-ornithine + NAD(+) + H2O. The protein operates within siderophore biosynthesis; ferrichrome biosynthesis. In terms of biological role, catalyzes the conversion of L-ornithine to N(5)-hydroxyornithine, the first step in the biosynthesis of all hydroxamate-containing siderophores, such as ferrichrome. The chain is L-ornithine N(5)-monooxygenase from Schizosaccharomyces pombe (strain 972 / ATCC 24843) (Fission yeast).